Consider the following 379-residue polypeptide: Lipid-A-disaccharide synthase (379 aa).

The protein belongs to the LpxB family.

The catalysed reaction is a lipid X + a UDP-2-N,3-O-bis[(3R)-3-hydroxyacyl]-alpha-D-glucosamine = a lipid A disaccharide + UDP + H(+). The protein operates within bacterial outer membrane biogenesis; LPS lipid A biosynthesis. In terms of biological role, condensation of UDP-2,3-diacylglucosamine and 2,3-diacylglucosamine-1-phosphate to form lipid A disaccharide, a precursor of lipid A, a phosphorylated glycolipid that anchors the lipopolysaccharide to the outer membrane of the cell. In Persephonella marina (strain DSM 14350 / EX-H1), this protein is Lipid-A-disaccharide synthase.